Consider the following 500-residue polypeptide: MGLPGRRNPLLSARRAAASLRRSRRLPVYVAAVFFVASVLLMFRDEILYLTTARSPSSSLPTTGGSAGGAGLARKEELVSVNKPVLLGHGGKPEKHHSVTERHRPKVSAKRRPNKKAAKAARKKFMASPSVAAGAEVNVPETCNLSKGKWVFDNATYPLYREQECEYLTAQVTCTRNGRRDDGYQKWRWQPRDCDLPLAFDARLFMERLRGKRLMFVGDSLNRNQWESMVCLVRPALSPGKSYVTWWDGQRVVLHAWEYNATVEFYWAPFLVESNSDDPKAHSIRDRVIKPEAIAAHAGDWVGVDYLVFNTYIWWMNTVNMKVVRPTGKTWEEYDEVGRIEAYRRVLDTWATWVNDNVDPARTSVFFMSVSPLHISPEAWGNPGGVRCAKEDAPVQNWHGPLWLGTDWDMFRAARNASRAAGRVPVTFVDVTAMSELRKDGHTSVHTIRQGRVLTPEQQADPATYADCIHWCLPGVPDVWNLMLYARILSRPPAAAGHVA.

The Cytoplasmic portion of the chain corresponds to 1–25; sequence MGLPGRRNPLLSARRAAASLRRSRR. The chain crosses the membrane as a helical; Signal-anchor for type II membrane protein span at residues 26–43; the sequence is LPVYVAAVFFVASVLLMF. Residues 44-500 are Lumenal-facing; it reads RDEILYLTTA…RPPAAAGHVA (457 aa). The tract at residues 84–116 is disordered; that stretch reads PVLLGHGGKPEKHHSVTERHRPKVSAKRRPNKK. Residues 91–102 show a composition bias toward basic and acidic residues; that stretch reads GKPEKHHSVTER. Residues 103–116 are compositionally biased toward basic residues; that stretch reads HRPKVSAKRRPNKK. 4 disulfide bridges follow: Cys-143–Cys-194, Cys-165–Cys-231, Cys-174–Cys-472, and Cys-388–Cys-468. Residues Asn-144 and Asn-154 are each glycosylated (N-linked (GlcNAc...) asparagine). The short motif at 218-220 is the GDS motif element; it reads GDS. Ser-220 (nucleophile) is an active-site residue. Asn-260 and Asn-416 each carry an N-linked (GlcNAc...) asparagine glycan. The Proton donor role is filled by Asp-467. Positions 467-470 match the DXXH motif motif; that stretch reads DCIH. The active-site Proton acceptor is His-470.

The protein belongs to the PC-esterase family. TBL subfamily. In terms of tissue distribution, expressed at low levels in roots and leaves.

The protein resides in the golgi apparatus membrane. In terms of biological role, xylan acetyltransferase required for 2-O- and 3-O-monoacetylation of xylosyl residues in xylan. Catalyzes the 2-O-acetylation of xylan, followed by nonenzymatic acetyl migration to the O-3 position, resulting in products that are monoacetylated at both O-2 and O-3 positions. The protein is Xylan O-acetyltransferase 2 of Oryza sativa subsp. japonica (Rice).